The sequence spans 222 residues: MGQKVHPHGLRVGVIKDWDAKWYADKKNFSDNLVEDNNIRNFVKKKVYAAGISKIEIERAGKRVKLNIYTAKPGMVIGKGGQGIEALKGELKNIVSDNKNILINIVEVKSAETDAQLMAENVAQQLEKRISFRRAMKQTIQRAMKSGIKGVKTACSGRLGGADIARTEFYHEGTIPLQTLRADIDYGFAEADTTYGKIGVKVWVYKGEVLPAKKEVKEEVNA.

Residues 39-109 (IRNFVKKKVY…NILINIVEVK (71 aa)) form the KH type-2 domain.

Belongs to the universal ribosomal protein uS3 family. In terms of assembly, part of the 30S ribosomal subunit. Forms a tight complex with proteins S10 and S14.

Its function is as follows. Binds the lower part of the 30S subunit head. Binds mRNA in the 70S ribosome, positioning it for translation. This chain is Small ribosomal subunit protein uS3, found in Clostridium tetani (strain Massachusetts / E88).